A 178-amino-acid chain; its full sequence is Crossover junction endodeoxyribonuclease RuvC (178 aa).

Active-site residues include Asp18, Glu78, and Asp150. Mg(2+)-binding residues include Asp18, Glu78, and Asp150.

It belongs to the RuvC family. Homodimer which binds Holliday junction (HJ) DNA. The HJ becomes 2-fold symmetrical on binding to RuvC with unstacked arms; it has a different conformation from HJ DNA in complex with RuvA. In the full resolvosome a probable DNA-RuvA(4)-RuvB(12)-RuvC(2) complex forms which resolves the HJ. Mg(2+) serves as cofactor.

It localises to the cytoplasm. It carries out the reaction Endonucleolytic cleavage at a junction such as a reciprocal single-stranded crossover between two homologous DNA duplexes (Holliday junction).. Its function is as follows. The RuvA-RuvB-RuvC complex processes Holliday junction (HJ) DNA during genetic recombination and DNA repair. Endonuclease that resolves HJ intermediates. Cleaves cruciform DNA by making single-stranded nicks across the HJ at symmetrical positions within the homologous arms, yielding a 5'-phosphate and a 3'-hydroxyl group; requires a central core of homology in the junction. The consensus cleavage sequence is 5'-(A/T)TT(C/G)-3'. Cleavage occurs on the 3'-side of the TT dinucleotide at the point of strand exchange. HJ branch migration catalyzed by RuvA-RuvB allows RuvC to scan DNA until it finds its consensus sequence, where it cleaves and resolves the cruciform DNA. The chain is Crossover junction endodeoxyribonuclease RuvC from Granulibacter bethesdensis (strain ATCC BAA-1260 / CGDNIH1).